Here is an 86-residue protein sequence, read N- to C-terminus: MKVLKRDSMLLLITLYFLLTTSMARQDPFLVGVEKDVVPAGTDLKQNKAKPHLPNLFRTMRRVPTGPNPLHHISPPQPGSLNYARN.

Residues 1 to 24 (MKVLKRDSMLLLITLYFLLTTSMA) form the signal peptide. Residues 43-86 (DLKQNKAKPHLPNLFRTMRRVPTGPNPLHHISPPQPGSLNYARN) are disordered. Hydroxyproline occurs at positions 64 and 67. O-linked (Ara...) hydroxyproline glycosylation occurs at Pro67.

This sequence belongs to the CLV3/ESR signal peptide family. The O-glycosylation (arabinosylation) of the hydroxyproline Pro-67 enhances binding affinity of the CLE8p peptide for its receptor. Mostly expressed in siliques, and, to a lower extent, in flowers. Expressed in young embryos and endosperm.

The protein resides in the secreted. Its subcellular location is the extracellular space. Extracellular signal peptide that regulates cell fate. Represses root apical meristem maintenance. Positively regulates the expression of the transcription factor WOX8 and thus, regulates early embryo development. Regulates the transition of protophloem cells from proliferation to differentiation, thus impinging on postembryonic growth capacity of the root meristem; this signaling pathway requires CRN and CLV2. This Arabidopsis thaliana (Mouse-ear cress) protein is CLAVATA3/ESR (CLE)-related protein 8.